A 310-amino-acid chain; its full sequence is MKPKIFIDGEHGTTGLQIRTRLAERDDLEVISIPEAERRNKDLRADYLRAADIAILCLPDDASKEAVSLLEGHNSTRIIDTSTTHRVHPDWAYGFAELAKGQRERIAEARLVANPGCYPTGAIALVRPLRDAGLLPADYPVSVNAVSGYTGGGKQLIAQMEDRNHPDYLAANNFLYGLPLKHKHVPELQLHGRLDRRPIFSPSVGRFPQGMIVQVPLFLSELEGSPSLAKVHAVLTEHYAGQDIVEVVPLEESAKLPRVDAEELAGKDGMKLFVFGTEDHGQVNLVALLDNLGKGASGAAVQNMNLMLGK.

C117 is an active-site residue.

Belongs to the NAGSA dehydrogenase family. Type 2 subfamily.

Its subcellular location is the cytoplasm. It carries out the reaction N-acetyl-L-glutamate 5-semialdehyde + phosphate + NADP(+) = N-acetyl-L-glutamyl 5-phosphate + NADPH + H(+). The protein operates within amino-acid biosynthesis; L-arginine biosynthesis; N(2)-acetyl-L-ornithine from L-glutamate: step 3/4. Functionally, catalyzes the NADPH-dependent reduction of N-acetyl-5-glutamyl phosphate to yield N-acetyl-L-glutamate 5-semialdehyde. The polypeptide is N-acetyl-gamma-glutamyl-phosphate reductase (Brucella melitensis biotype 1 (strain ATCC 23456 / CCUG 17765 / NCTC 10094 / 16M)).